We begin with the raw amino-acid sequence, 462 residues long: GTPase Der (462 aa).

2 EngA-type G domains span residues 3–170 (ITIA…TSQK) and 201–372 (IKIA…FNSI). Residues 9 to 16 (GRTNVGKS), 57 to 61 (DTPGI), 122 to 125 (NKIE), 207 to 214 (GKPNVGKS), 254 to 258 (DTAGI), and 319 to 322 (NKND) each bind GTP. Residues 373-457 (KKIHTSKITE…SIVLYFKSSK (85 aa)) enclose the KH-like domain.

This sequence belongs to the TRAFAC class TrmE-Era-EngA-EngB-Septin-like GTPase superfamily. EngA (Der) GTPase family. Associates with the 50S ribosomal subunit.

GTPase that plays an essential role in the late steps of ribosome biogenesis. The chain is GTPase Der from Buchnera aphidicola subsp. Baizongia pistaciae (strain Bp).